The following is a 140-amino-acid chain: MPHARTETSVGTYESHSTSELEDLTEPEQRELKTKLTKLEAEIVTLRHVLAAKERRCGELKRKLGLTALVGLRQNLSKSWLDVQVSNTYVKQKTSAALSTMGTLICRKLGGVKKSATFRSFEGLMGTIKSKVSGGKRAWP.

Residues 1–28 (MPHARTETSVGTYESHSTSELEDLTEPE) form a disordered region. The span at 7 to 18 (ETSVGTYESHST) shows a compositional bias: polar residues. Positions 28-57 (EQRELKTKLTKLEAEIVTLRHVLAAKERRC) form a coiled coil.

This sequence belongs to the TPD52 family. Interacts with TPD52L2. Specifically expressed in testis. Expressed at 5.6-fold higher levels in adult testis than in fetal testis.

This is Tumor protein D55 (TPD52L3) from Homo sapiens (Human).